A 112-amino-acid chain; its full sequence is Small ribosomal subunit protein uS11c (112 aa).

Belongs to the universal ribosomal protein uS11 family. In terms of assembly, part of the 30S ribosomal subunit.

It is found in the plastid. The protein is Small ribosomal subunit protein uS11c of Euglena longa (Euglenophycean alga).